The sequence spans 190 residues: Mitochondrial inner membrane protease subunit 1 (190 aa).

Catalysis depends on residues Ser40 and Lys84.

The protein belongs to the peptidase S26 family. IMP1 subfamily. In terms of assembly, component of the mitochondrial inner membrane peptidase (IMP) complex which at least consists of IMP1, IMP2 and SOM1.

It is found in the mitochondrion inner membrane. Its function is as follows. Catalytic component of the mitochondrial inner membrane peptidase (IMP) complex. IMP catalyzes the removal of signal peptides required for the targeting of proteins from the mitochondrial matrix, across the inner membrane, into the inter-membrane space. The two catalytic IMP subunits seem to have non-overlapping substrate specificities. IMP1 substrates include nuclear encoded CYB2, mitochondrially encoded COX2, NADH-cytochrome b5 reductase and GUT2. The sequence is that of Mitochondrial inner membrane protease subunit 1 (IMP1) from Saccharomyces cerevisiae (strain ATCC 204508 / S288c) (Baker's yeast).